The following is a 344-amino-acid chain: Acireductone dioxygenase (344 aa).

The Fe(2+) site is built by His-92, His-94, Glu-98, and His-137. Positions 92, 94, 98, and 137 each coordinate Ni(2+).

Belongs to the acireductone dioxygenase (ARD) family. It depends on Fe(2+) as a cofactor. Requires Ni(2+) as cofactor.

Its subcellular location is the cytoplasm. It localises to the nucleus. The catalysed reaction is 1,2-dihydroxy-5-(methylsulfanyl)pent-1-en-3-one + O2 = 4-methylsulfanyl-2-oxobutanoate + formate + 2 H(+). The enzyme catalyses 1,2-dihydroxy-5-(methylsulfanyl)pent-1-en-3-one + O2 = 3-(methylsulfanyl)propanoate + CO + formate + 2 H(+). It functions in the pathway amino-acid biosynthesis; L-methionine biosynthesis via salvage pathway; L-methionine from S-methyl-5-thio-alpha-D-ribose 1-phosphate: step 5/6. In terms of biological role, catalyzes 2 different reactions between oxygen and the acireductone 1,2-dihydroxy-3-keto-5-methylthiopentene (DHK-MTPene) depending upon the metal bound in the active site. Fe-containing acireductone dioxygenase (Fe-ARD) produces formate and 2-keto-4-methylthiobutyrate (KMTB), the alpha-ketoacid precursor of methionine in the methionine recycle pathway. Ni-containing acireductone dioxygenase (Ni-ARD) produces methylthiopropionate, carbon monoxide and formate, and does not lie on the methionine recycle pathway. This chain is Acireductone dioxygenase, found in Leishmania major.